The primary structure comprises 333 residues: L-lactate dehydrogenase B chain (333 aa).

Residues 29–57 (GQVG…LEDK) and R99 contribute to the NAD(+) site. Residues R106, N138, and R169 each contribute to the substrate site. N138 lines the NAD(+) pocket. The Proton acceptor role is filled by H193. Position 248 (T248) interacts with substrate.

Belongs to the LDH/MDH superfamily. LDH family. As to quaternary structure, homotetramer.

The protein resides in the cytoplasm. It catalyses the reaction (S)-lactate + NAD(+) = pyruvate + NADH + H(+). The protein operates within fermentation; pyruvate fermentation to lactate; (S)-lactate from pyruvate: step 1/1. Its function is as follows. Interconverts simultaneously and stereospecifically pyruvate and lactate with concomitant interconversion of NADH and NAD(+). The chain is L-lactate dehydrogenase B chain (LDHB) from Sceloporus woodi (Florida scrub lizard).